A 276-amino-acid chain; its full sequence is Putative pyruvate, phosphate dikinase regulatory protein (276 aa).

ADP is bound at residue 152–159 (GISRTSKT).

The protein belongs to the pyruvate, phosphate/water dikinase regulatory protein family. PDRP subfamily.

It catalyses the reaction N(tele)-phospho-L-histidyl/L-threonyl-[pyruvate, phosphate dikinase] + ADP = N(tele)-phospho-L-histidyl/O-phospho-L-threonyl-[pyruvate, phosphate dikinase] + AMP + H(+). It carries out the reaction N(tele)-phospho-L-histidyl/O-phospho-L-threonyl-[pyruvate, phosphate dikinase] + phosphate + H(+) = N(tele)-phospho-L-histidyl/L-threonyl-[pyruvate, phosphate dikinase] + diphosphate. In terms of biological role, bifunctional serine/threonine kinase and phosphorylase involved in the regulation of the pyruvate, phosphate dikinase (PPDK) by catalyzing its phosphorylation/dephosphorylation. In Staphylococcus carnosus (strain TM300), this protein is Putative pyruvate, phosphate dikinase regulatory protein.